Here is a 528-residue protein sequence, read N- to C-terminus: Protein BFR2 (528 aa).

Disordered regions lie at residues 14-158 (NKSK…ADAK) and 372-401 (DSNSAQDGGQEEDADVPANYDPRKKDNNAI). Over residues 132-146 (DSGDSDSDSGSDAGE) the composition is skewed to acidic residues.

It belongs to the AATF family.

The protein localises to the nucleus. It is found in the nucleolus. The protein is Protein BFR2 (BFR2) of Eremothecium gossypii (strain ATCC 10895 / CBS 109.51 / FGSC 9923 / NRRL Y-1056) (Yeast).